The chain runs to 233 residues: Leucyl/phenylalanyl-tRNA--protein transferase (233 aa).

It belongs to the L/F-transferase family.

The protein localises to the cytoplasm. The enzyme catalyses N-terminal L-lysyl-[protein] + L-leucyl-tRNA(Leu) = N-terminal L-leucyl-L-lysyl-[protein] + tRNA(Leu) + H(+). It catalyses the reaction N-terminal L-arginyl-[protein] + L-leucyl-tRNA(Leu) = N-terminal L-leucyl-L-arginyl-[protein] + tRNA(Leu) + H(+). The catalysed reaction is L-phenylalanyl-tRNA(Phe) + an N-terminal L-alpha-aminoacyl-[protein] = an N-terminal L-phenylalanyl-L-alpha-aminoacyl-[protein] + tRNA(Phe). Its function is as follows. Functions in the N-end rule pathway of protein degradation where it conjugates Leu, Phe and, less efficiently, Met from aminoacyl-tRNAs to the N-termini of proteins containing an N-terminal arginine or lysine. The sequence is that of Leucyl/phenylalanyl-tRNA--protein transferase from Anaeromyxobacter dehalogenans (strain 2CP-1 / ATCC BAA-258).